A 186-amino-acid polypeptide reads, in one-letter code: Nucleoside diphosphate kinase, mitochondrial (186 aa).

Residues 1–32 constitute a mitochondrion transit peptide; the sequence is MGSLFGRVAALRALLCGPRFQCLLVRPSSGGP. ATP is bound by residues Lys44, Phe92, Arg120, Thr126, Arg137, and Asn147. Catalysis depends on His150, which acts as the Pros-phosphohistidine intermediate.

This sequence belongs to the NDK family. Homohexamer. Interacts with OPA1. Interacts with CAPN8. It depends on Mg(2+) as a cofactor. As to expression, expressed in the base region of the oxyntic and pyloric mucosae.

The protein localises to the mitochondrion intermembrane space. It is found in the mitochondrion matrix. The enzyme catalyses a 2'-deoxyribonucleoside 5'-diphosphate + ATP = a 2'-deoxyribonucleoside 5'-triphosphate + ADP. It carries out the reaction a ribonucleoside 5'-diphosphate + ATP = a ribonucleoside 5'-triphosphate + ADP. Its function is as follows. Major role in the synthesis of nucleoside triphosphates other than ATP. The ATP gamma phosphate is transferred to the NDP beta phosphate via a ping-pong mechanism, using a phosphorylated active-site intermediate. Through the catalyzed exchange of gamma-phosphate between di- and triphosphonucleosides participates in regulation of intracellular nucleotide homeostasis. Binds to anionic phospholipids, predominantly to cardiolipin; the binding inhibits its phosphotransfer activity. Acts as a mitochondria-specific NDK; its association with cardiolipin-containing mitochondrial inner membrane is coupled to respiration suggesting that ADP locally regenerated in the mitochondrion innermembrane space by its activity is directly taken up via ANT ADP/ATP translocase into the matrix space to stimulate respiratory ATP regeneration. Proposed to increase GTP-loading on dynamin-related GTPase OPA1 in mitochondria. In vitro can induce liposome cross-linking suggesting that it can cross-link inner and outer membranes to form contact sites, and promotes intermembrane migration of anionic phosphoplipids. Promotes the redistribution of cardiolipin between the mitochondrial inner membrane and outer membrane which is implicated in pro-apoptotic signaling. In Mus musculus (Mouse), this protein is Nucleoside diphosphate kinase, mitochondrial (Nme4).